The following is a 111-amino-acid chain: HTH-type transcriptional regulator SinR (111 aa).

An HTH cro/C1-type domain is found at 6-61; sequence IKQYRKEKGYSLSELAEKAGVAKSYLSSIERNLQTNPSIQFLEKVSAVLDVSVHTL. Residues 17-36 constitute a DNA-binding region (H-T-H motif); sequence LSELAEKAGVAKSYLSSIER. Positions 65–103 constitute a Sin domain; the sequence is KHETEYDGQLDSEWEKLVRDAMTSGVSKKQFREFLDYQK.

Homotetramer in the absence of SinI. Heterodimer with SinI. Interaction with SinI disrupts the SinR tetramer and its repressor activity. Interacts with hpr.

Negative as well as positive regulator of alternate developmental processes that are induced at the end of vegetative growth in response to nutrient depletion. Binds to the alkaline protease (aprE) gene at two sites. Also acts as a repressor of the key sporulation gene spo0A. Negatively regulates transcription of the eps operon, which is responsible for the biosynthesis of an exopolysaccharide involved in biofilm formation; therefore it could govern the transition between a state in which bacteria swim or swarm and a state in which bacteria assemble into multicellular communities. Acts with Hpr as a corepressor of epr expression. Also negatively regulates transcription of the lutABC operon, which is required for lactate utilization. Repressor activity is regulated by SinI. The protein is HTH-type transcriptional regulator SinR (sinR) of Bacillus subtilis (strain 168).